A 119-amino-acid polypeptide reads, in one-letter code: DNA-binding protein inhibitor ID-3 (119 aa).

The bHLH domain maps to 28–80 (RGKSPSTEEPLSLLDDMNHCYSRLRELVPGVPRGTQLSQVEILQRVIDYILDL). The interaction with IFI204 stretch occupies residues 35–87 (EEPLSLLDDMNHCYSRLRELVPGVPRGTQLSQVEILQRVIDYILDLQVVLAEP).

As to quaternary structure, homodimer, and heterodimer with other HLH proteins. Interacts with CLOCK and BMAL1. Interacts with COPS5 and COPS7A. Interacts with IFI204. Interacts with GATA4 and NKX2-5. Interacts with ANKRD2; both proteins cooperate in myoblast differentiation. In terms of processing, polyubiquitinated; which is favored by Ifi204 and leads to proteasomal degradation. In terms of tissue distribution, expressed by myoblasts (at protein level).

The protein localises to the nucleus. It localises to the cytoplasm. Functionally, transcriptional regulator (lacking a basic DNA binding domain) which negatively regulates the basic helix-loop-helix (bHLH) transcription factors by forming heterodimers and inhibiting their DNA binding and transcriptional activity. Implicated in regulating a variety of cellular processes, including cellular growth, senescence, differentiation, apoptosis, angiogenesis, and neoplastic transformation. Involved in myogenesis by inhibiting skeletal muscle and cardiac myocyte differentiation and promoting muscle precursor cells proliferation. Inhibits the binding of E2A-containing protein complexes to muscle creatine kinase E-box enhancer. Regulates the circadian clock by repressing the transcriptional activator activity of the CLOCK-BMAL1 heterodimer. In Mus musculus (Mouse), this protein is DNA-binding protein inhibitor ID-3 (Id3).